Consider the following 187-residue polypeptide: Large ribosomal subunit protein uL5 (187 aa).

Belongs to the universal ribosomal protein uL5 family. As to quaternary structure, part of the 50S ribosomal subunit; part of the 5S rRNA/L5/L18/L25 subcomplex. Contacts the 5S rRNA and the P site tRNA. Forms a bridge to the 30S subunit in the 70S ribosome.

This is one of the proteins that bind and probably mediate the attachment of the 5S RNA into the large ribosomal subunit, where it forms part of the central protuberance. In the 70S ribosome it contacts protein S13 of the 30S subunit (bridge B1b), connecting the 2 subunits; this bridge is implicated in subunit movement. Contacts the P site tRNA; the 5S rRNA and some of its associated proteins might help stabilize positioning of ribosome-bound tRNAs. The chain is Large ribosomal subunit protein uL5 from Mycobacterium bovis (strain ATCC BAA-935 / AF2122/97).